The chain runs to 84 residues: U4-theraphotoxin-Hhn1n (84 aa).

Residues 1–22 (MKVTLIAILTCAAVLVLHTTAA) form the signal peptide. A propeptide spanning residues 23–47 (EELEESQLMEVGMPDTELAAVDEER) is cleaved from the precursor. Disulfide bonds link cysteine 51–cysteine 65, cysteine 55–cysteine 76, and cysteine 70–cysteine 81.

The protein belongs to the neurotoxin 12 (Hwtx-2) family. 02 (Hwtx-2) subfamily. Expressed by the venom gland.

Its subcellular location is the secreted. Postsynaptic neurotoxin. In Cyriopagopus hainanus (Chinese bird spider), this protein is U4-theraphotoxin-Hhn1n.